The following is a 444-amino-acid chain: Acyl-CoA 6-desaturase (444 aa).

The tract at residues 1-21 (MGKGGNQGEGSTERQAPMPTF) is disordered. Residues 1–130 (MGKGGNQGEG…EDMNLFKTNH (130 aa)) lie on the Cytoplasmic side of the membrane. Positions 18 to 95 (MPTFRWEEIQ…LKPLLIGELA (78 aa)) constitute a Cytochrome b5 heme-binding domain. A helical transmembrane segment spans residues 131-151 (LFFFLLLSHIIVMESLAWFIL). Ser-152 is a topological domain (lumenal). A helical membrane pass occupies residues 153–173 (YFGTGWIPTLVTAFVLATSQA). Over 174-264 (QAGWLQHDYG…KYLPYNHQHE (91 aa)) the chain is Cytoplasmic. The short motif at 180 to 184 (HDYGH) is the Histidine box-1 element. The Histidine box-2 signature appears at 217-221 (HFQHH). A helical membrane pass occupies residues 265 to 285 (YFFLIGPPLLIPMYFQYQIIM). Residues 286–305 (TMISRRDWVDLAWAISYYMR) lie on the Lumenal side of the membrane. Residues 306–326 (FFYTYIPFYGILGALVFLNFI) form a helical membrane-spanning segment. The Cytoplasmic segment spans residues 327 to 444 (RFLESHWFVW…ELWLDAYLHK (118 aa)). Positions 382–386 (QIEHH) match the Histidine box-3 motif.

It belongs to the fatty acid desaturase type 1 family. Highly expressed in the adrenal gland, liver, brain, and testis, tissues where lipogenesis and steroidogenesis are active. Also detected in lung, heart, and skeletal muscle.

The protein resides in the endoplasmic reticulum membrane. It carries out the reaction (9Z,12Z)-octadecadienoyl-CoA + 2 Fe(II)-[cytochrome b5] + O2 + 2 H(+) = (6Z,9Z,12Z)-octadecatrienoyl-CoA + 2 Fe(III)-[cytochrome b5] + 2 H2O. The catalysed reaction is (9Z,12Z,15Z)-octadecatrienoyl-CoA + 2 Fe(II)-[cytochrome b5] + O2 + 2 H(+) = (6Z,9Z,12Z,15Z)-octadecatetraenoyl-CoA + 2 Fe(III)-[cytochrome b5] + 2 H2O. It catalyses the reaction (9Z,12Z,15Z,18Z,21Z)-tetracosapentaenoyl-CoA + 2 Fe(II)-[cytochrome b5] + O2 + 2 H(+) = (6Z,9Z,12Z,15Z,18Z,21Z)-tetracosahexaenoyl-CoA + 2 Fe(III)-[cytochrome b5] + 2 H2O. The enzyme catalyses (11E)-octadecenoyl-CoA + 2 Fe(II)-[cytochrome b5] + O2 + 2 H(+) = (6Z,11E)-octadecadienoyl-CoA + 2 Fe(III)-[cytochrome b5] + 2 H2O. It carries out the reaction (11Z,14Z)-eicosadienoyl-CoA + 2 Fe(II)-[cytochrome b5] + O2 + 2 H(+) = (8Z,11Z,14Z)-eicosatrienoyl-CoA + 2 Fe(III)-[cytochrome b5] + 2 H2O. The catalysed reaction is (11Z,14Z,17Z)-eicosatrienoyl-CoA + 2 Fe(II)-[cytochrome b5] + O2 + 2 H(+) = (8Z,11Z,14Z,17Z)-eicosatetraenoyl-CoA + 2 Fe(III)-[cytochrome b5] + 2 H2O. Its pathway is lipid metabolism; polyunsaturated fatty acid biosynthesis. Its function is as follows. Involved in the biosynthesis of highly unsaturated fatty acids (HUFA) from the essential polyunsaturated fatty acids (PUFA) linoleic acid (LA) (18:2n-6) and alpha-linolenic acid (ALA) (18:3n-3) precursors, acting as a fatty acyl-coenzyme A (CoA) desaturase that introduces a cis double bond at carbon 6 of the fatty acyl chain. Catalyzes the first and rate limiting step in this pathway which is the desaturation of LA (18:2n-6) and ALA (18:3n-3) into gamma-linoleate (GLA) (18:3n-6) and stearidonate (18:4n-3), respectively. Subsequently, in the biosynthetic pathway of HUFA n-3 series, it desaturates tetracosapentaenoate (24:5n-3) to tetracosahexaenoate (24:6n-3), which is then converted to docosahexaenoate (DHA)(22:6n-3), an important lipid for nervous system function. It can also desaturate (11E)-octadecenoate (trans-vaccenoate) at carbon 6 generating (6Z,11E)-octadecadienoate. In addition to Delta-6 activity, this enzyme exhibits Delta-8 activity with slight biases toward n-3 fatty acyl-CoA substrates. This Mus musculus (Mouse) protein is Acyl-CoA 6-desaturase.